A 720-amino-acid chain; its full sequence is Polyribonucleotide nucleotidyltransferase (720 aa).

Residues Asp484 and Asp490 each contribute to the Mg(2+) site. Residues Pro551 to Ile610 form the KH domain. Residues Gly620 to Arg688 form the S1 motif domain. The tract at residues Pro697–Ser720 is disordered.

Belongs to the polyribonucleotide nucleotidyltransferase family. Requires Mg(2+) as cofactor.

Its subcellular location is the cytoplasm. It catalyses the reaction RNA(n+1) + phosphate = RNA(n) + a ribonucleoside 5'-diphosphate. Involved in mRNA degradation. Catalyzes the phosphorolysis of single-stranded polyribonucleotides processively in the 3'- to 5'-direction. The protein is Polyribonucleotide nucleotidyltransferase of Dehalococcoides mccartyi (strain CBDB1).